The following is a 911-amino-acid chain: Protein translocase subunit SecA (911 aa).

Residues glutamine 86, 104–108 (GEGKT), and aspartate 494 each bind ATP. Residues 856–911 (VEGIDAPQRPAQLRFTGPSEDGQSAVTRSGTDSGATVAAGTNRRSRRQAERRGRRG) are disordered. Residues 876–889 (DGQSAVTRSGTDSG) show a composition bias toward polar residues. The segment covering 902–911 (RQAERRGRRG) has biased composition (basic and acidic residues).

This sequence belongs to the SecA family. As to quaternary structure, monomer and homodimer. Part of the essential Sec protein translocation apparatus which comprises SecA, SecYEG and auxiliary proteins SecDF. Other proteins may also be involved.

The protein localises to the cell membrane. It is found in the cytoplasm. It carries out the reaction ATP + H2O + cellular proteinSide 1 = ADP + phosphate + cellular proteinSide 2.. Part of the Sec protein translocase complex. Interacts with the SecYEG preprotein conducting channel. Has a central role in coupling the hydrolysis of ATP to the transfer of proteins into and across the cell membrane, serving as an ATP-driven molecular motor driving the stepwise translocation of polypeptide chains across the membrane. In Micrococcus luteus (strain ATCC 4698 / DSM 20030 / JCM 1464 / CCM 169 / CCUG 5858 / IAM 1056 / NBRC 3333 / NCIMB 9278 / NCTC 2665 / VKM Ac-2230) (Micrococcus lysodeikticus), this protein is Protein translocase subunit SecA.